Consider the following 376-residue polypeptide: Thymidine kinase (376 aa).

The disordered stretch occupies residues methionine 1 to glutamine 44. Residues serine 19–arginine 32 show a composition bias toward basic residues. A compositionally biased stretch (basic and acidic residues) spans arginine 33–glutamine 44. Residue glycine 56–threonine 63 participates in ATP binding. The active-site Proton acceptor is the glutamate 83. Positions 101 and 125 each coordinate substrate. Arginine 216 lines the ATP pocket. Arginine 222 is a binding site for substrate. The tract at residues glycine 260–proline 280 is disordered.

This sequence belongs to the herpesviridae thymidine kinase family. Homodimer.

It catalyses the reaction thymidine + ATP = dTMP + ADP + H(+). Catalyzes the transfer of the gamma-phospho group of ATP to thymidine to generate dTMP in the salvage pathway of pyrimidine synthesis. The dTMP serves as a substrate for DNA polymerase during viral DNA replication. Allows the virus to be reactivated and to grow in non-proliferative cells lacking a high concentration of phosphorylated nucleic acid precursors. In Human herpesvirus 1 (strain HFEM) (HHV-1), this protein is Thymidine kinase.